The primary structure comprises 591 residues: Aspartate--tRNA(Asp/Asn) ligase (591 aa).

Glu176 is a binding site for L-aspartate. Residues 200–203 (QLFK) are aspartate. Arg222 is a binding site for L-aspartate. ATP is bound by residues 222 to 224 (RDE) and Gln231. His450 is an L-aspartate binding site. Glu484 contacts ATP. Residue Arg491 participates in L-aspartate binding. ATP is bound at residue 536–539 (GLDR).

It belongs to the class-II aminoacyl-tRNA synthetase family. Type 1 subfamily. As to quaternary structure, homodimer.

It localises to the cytoplasm. It catalyses the reaction tRNA(Asx) + L-aspartate + ATP = L-aspartyl-tRNA(Asx) + AMP + diphosphate. Its function is as follows. Aspartyl-tRNA synthetase with relaxed tRNA specificity since it is able to aspartylate not only its cognate tRNA(Asp) but also tRNA(Asn). Reaction proceeds in two steps: L-aspartate is first activated by ATP to form Asp-AMP and then transferred to the acceptor end of tRNA(Asp/Asn). The protein is Aspartate--tRNA(Asp/Asn) ligase of Bacillus cereus (strain ATCC 10987 / NRS 248).